Reading from the N-terminus, the 315-residue chain is Peroxidase 1 (315 aa).

A signal peptide spans methionine 1–alanine 21. Glutamine 22 is subject to Pyrrolidone carboxylic acid. Cystine bridges form between cysteine 32-cysteine 107, cysteine 65-cysteine 70, cysteine 113-cysteine 310, and cysteine 193-cysteine 219. The Proton acceptor role is filled by histidine 63. Positions 64, 67, 69, 71, and 73 each coordinate Ca(2+). Proline 155 contributes to the substrate binding site. Asparagine 158 carries N-linked (GlcNAc...) asparagine glycosylation. Histidine 186 lines the heme b pocket. Threonine 187 contacts Ca(2+). Residues aspartate 234, threonine 237, and aspartate 242 each coordinate Ca(2+). N-linked (GlcNAc...) asparagine glycosylation is present at asparagine 265.

It belongs to the peroxidase family. Classical plant (class III) peroxidase subfamily. Requires Ca(2+) as cofactor. Heme b serves as cofactor.

The protein localises to the secreted. It catalyses the reaction 2 a phenolic donor + H2O2 = 2 a phenolic radical donor + 2 H2O. Functionally, removal of H(2)O(2), oxidation of toxic reductants, biosynthesis and degradation of lignin, suberization, auxin catabolism, response to environmental stresses such as wounding, pathogen attack and oxidative stress. These functions might be dependent on each isozyme/isoform in each plant tissue. In terms of biological role, involved in defense response to powdery meldew fungus. The polypeptide is Peroxidase 1 (Hordeum vulgare (Barley)).